Consider the following 616-residue polypeptide: Dihydroxy-acid dehydratase (616 aa).

Aspartate 81 is a binding site for Mg(2+). Position 122 (cysteine 122) interacts with [2Fe-2S] cluster. Mg(2+) contacts are provided by aspartate 123 and lysine 124. Lysine 124 is subject to N6-carboxylysine. Residue cysteine 195 participates in [2Fe-2S] cluster binding. A Mg(2+)-binding site is contributed by glutamate 491. Residue serine 517 is the Proton acceptor of the active site.

The protein belongs to the IlvD/Edd family. Homodimer. [2Fe-2S] cluster is required as a cofactor. Requires Mg(2+) as cofactor.

It carries out the reaction (2R)-2,3-dihydroxy-3-methylbutanoate = 3-methyl-2-oxobutanoate + H2O. The enzyme catalyses (2R,3R)-2,3-dihydroxy-3-methylpentanoate = (S)-3-methyl-2-oxopentanoate + H2O. Its pathway is amino-acid biosynthesis; L-isoleucine biosynthesis; L-isoleucine from 2-oxobutanoate: step 3/4. It participates in amino-acid biosynthesis; L-valine biosynthesis; L-valine from pyruvate: step 3/4. Functions in the biosynthesis of branched-chain amino acids. Catalyzes the dehydration of (2R,3R)-2,3-dihydroxy-3-methylpentanoate (2,3-dihydroxy-3-methylvalerate) into 2-oxo-3-methylpentanoate (2-oxo-3-methylvalerate) and of (2R)-2,3-dihydroxy-3-methylbutanoate (2,3-dihydroxyisovalerate) into 2-oxo-3-methylbutanoate (2-oxoisovalerate), the penultimate precursor to L-isoleucine and L-valine, respectively. The protein is Dihydroxy-acid dehydratase of Shewanella sediminis (strain HAW-EB3).